The primary structure comprises 220 residues: N-(5'-phosphoribosyl)anthranilate isomerase (220 aa).

The protein belongs to the TrpF family.

The enzyme catalyses N-(5-phospho-beta-D-ribosyl)anthranilate = 1-(2-carboxyphenylamino)-1-deoxy-D-ribulose 5-phosphate. Its pathway is amino-acid biosynthesis; L-tryptophan biosynthesis; L-tryptophan from chorismate: step 3/5. This chain is N-(5'-phosphoribosyl)anthranilate isomerase, found in Gloeothece citriformis (strain PCC 7424) (Cyanothece sp. (strain PCC 7424)).